The following is a 562-amino-acid chain: Urocanate hydratase (562 aa).

Residues 52–53, Gln-130, 176–178, Glu-196, Arg-201, 242–243, 263–267, 273–274, and Tyr-322 contribute to the NAD(+) site; these read GG, GMG, NA, QTSAH, and YL. The active site involves Cys-410. NAD(+) is bound at residue Gly-492.

Belongs to the urocanase family. NAD(+) is required as a cofactor.

It is found in the cytoplasm. The catalysed reaction is 4-imidazolone-5-propanoate = trans-urocanate + H2O. It functions in the pathway amino-acid degradation; L-histidine degradation into L-glutamate; N-formimidoyl-L-glutamate from L-histidine: step 2/3. Its function is as follows. Catalyzes the conversion of urocanate to 4-imidazolone-5-propionate. The sequence is that of Urocanate hydratase from Klebsiella pneumoniae subsp. pneumoniae (strain ATCC 700721 / MGH 78578).